Reading from the N-terminus, the 336-residue chain is UDP-N-acetylglucosamine--N-acetylmuramyl-(pentapeptide) pyrophosphoryl-undecaprenol N-acetylglucosamine transferase (336 aa).

Residues 10–12 (TGG), Asn124, Arg157, Ser179, and Gln277 contribute to the UDP-N-acetyl-alpha-D-glucosamine site.

The protein belongs to the glycosyltransferase 28 family. MurG subfamily.

The protein resides in the cell inner membrane. The enzyme catalyses di-trans,octa-cis-undecaprenyl diphospho-N-acetyl-alpha-D-muramoyl-L-alanyl-D-glutamyl-meso-2,6-diaminopimeloyl-D-alanyl-D-alanine + UDP-N-acetyl-alpha-D-glucosamine = di-trans,octa-cis-undecaprenyl diphospho-[N-acetyl-alpha-D-glucosaminyl-(1-&gt;4)]-N-acetyl-alpha-D-muramoyl-L-alanyl-D-glutamyl-meso-2,6-diaminopimeloyl-D-alanyl-D-alanine + UDP + H(+). It functions in the pathway cell wall biogenesis; peptidoglycan biosynthesis. Cell wall formation. Catalyzes the transfer of a GlcNAc subunit on undecaprenyl-pyrophosphoryl-MurNAc-pentapeptide (lipid intermediate I) to form undecaprenyl-pyrophosphoryl-MurNAc-(pentapeptide)GlcNAc (lipid intermediate II). This chain is UDP-N-acetylglucosamine--N-acetylmuramyl-(pentapeptide) pyrophosphoryl-undecaprenol N-acetylglucosamine transferase, found in Wolinella succinogenes (strain ATCC 29543 / DSM 1740 / CCUG 13145 / JCM 31913 / LMG 7466 / NCTC 11488 / FDC 602W) (Vibrio succinogenes).